The chain runs to 603 residues: MNHIRNFSIIAHIDHGKSTLADRIIQRCGGLQDREMSAQVLDSMDLEKERGITIKAQTAALKYKARDGQIYNLNLIDTPGHVDFSYEVSRSLSACEGALLVVDASQGVEAQTVANCYTALDLGVEVVPVLNKMDLPQADPENAKQEIEDVIGIDATDAIPCSAKTGMGIDEILEAVIARVPPPKGNPDGALRAMIIDSWYDAYVGVVMLVRVVDGRLAKGDRIKLMASEAMYNAEQLGVFTPHTEPRQSLEAGEVGFVIAGIKELQAARVGDTVTLIKPGTGGAAFTATQALPGFKEIQPQVFAGLYPTEASEYDSLRDALEKLKLNDASLHYEPEVSQALGFGFRCGFLGLLHMEIVQERLEREFDQDLITTAPSVVYEVLKADGEIIKVENPSKIPDAGRVTEIREPIVTVHLYMPQDYVGAVMTLANLKRGVQLNMAYHGKQVMLTYEMPLGEIVLDFFDKLKSVSRGYASMDYEFKEFRASDVVKVDILLNGEKVDALSIIVHRSQSAYRGRAVVAKMREIISRQQFDVAIQAAIGANIIARETIKALRKNVIAKCYGGDISRKRKLLEKQKAGKKRMKQIGSVEVPQEAFLAILQVEE.

The region spanning 2–184 (NHIRNFSIIA…AVIARVPPPK (183 aa)) is the tr-type G domain. Residues 14–19 (DHGKST) and 131–134 (NKMD) contribute to the GTP site.

It belongs to the TRAFAC class translation factor GTPase superfamily. Classic translation factor GTPase family. LepA subfamily.

It localises to the cell inner membrane. The enzyme catalyses GTP + H2O = GDP + phosphate + H(+). In terms of biological role, required for accurate and efficient protein synthesis under certain stress conditions. May act as a fidelity factor of the translation reaction, by catalyzing a one-codon backward translocation of tRNAs on improperly translocated ribosomes. Back-translocation proceeds from a post-translocation (POST) complex to a pre-translocation (PRE) complex, thus giving elongation factor G a second chance to translocate the tRNAs correctly. Binds to ribosomes in a GTP-dependent manner. The chain is Elongation factor 4 from Polaromonas sp. (strain JS666 / ATCC BAA-500).